The chain runs to 656 residues: MLAVRRRGLRVLAVAPLRVRGLATTSTEFMEGEALTPKTVGPYMSERLEEFRPERIRNFSIVAHIDHGKSTLADRLLESSGNISRQERESAQFLDNLKVERERGITVKAQTASMLHRDSKTGESFMLNLVDTPGHVDFSYEVNRSLSACEGVLLLVDCSQGIQAQTLATYYAAKERNLHVVPVLTKIDMPHAEVDDSILSLSSLLDVDPDEVLLTSAKSGDGINDVLPAVVERLPPPVECDPAAPLRCLLVDSYYDDYRGTVCLVKVVDGAISPGDKIYSAHQKTKHDVQETGLLLPGRYKTKGLYAGQVGYIIAGMKSTTEAKVGDTFFREGAASADLKALPGFQEARSMVFASMYPTDDSSFDELRVAIEKLTLNDASVTAQQETSGALGMGFRCGFLGLLHMEVFHQRLSDEQGIQVMVTAPMVPYTVIDPNGEHLTVETPGAFPESTKYYEILEPMVEASIITPASYLGPVLALAKEKRGVQTNLVYLEDERIIVTIDVPWQEVVTNFYNELKTISSGYATLNYREIEPQKADIVKVDLLINGKVLDALSFVCHRSRATPDGRALCQKLKRVIDRQQYEISIQAALGGKIFAKERIAPYRKDVLIKSGKTVGGGDSTRKKKLLAKQKQGKRRMRTVANVQLSQDAFWSVLSK.

A mitochondrion-targeting transit peptide spans M1–F29. Residues E54–V238 enclose the tr-type G domain. GTP is bound by residues A63–S70, D131–H135, and T185–D188.

It belongs to the TRAFAC class translation factor GTPase superfamily. Classic translation factor GTPase family. LepA subfamily.

It localises to the mitochondrion inner membrane. It catalyses the reaction GTP + H2O = GDP + phosphate + H(+). Functionally, promotes mitochondrial protein synthesis. May act as a fidelity factor of the translation reaction, by catalyzing a one-codon backward translocation of tRNAs on improperly translocated ribosomes. Binds to mitochondrial ribosomes in a GTP-dependent manner. The chain is Translation factor GUF1 homolog, mitochondrial from Phytophthora infestans (strain T30-4) (Potato late blight agent).